The following is a 654-amino-acid chain: Acetyl-coenzyme A synthetase (654 aa).

CoA-binding positions include 191–194 (RRGQ) and Thr315. ATP-binding positions include 391–393 (GEP), 415–420 (DTWWQT), Asp506, and Arg521. Position 529 (Ser529) interacts with CoA. An ATP-binding site is contributed by Arg532. Mg(2+) contacts are provided by Val543, His545, and Val548. At Lys615 the chain carries N6-acetyllysine.

This sequence belongs to the ATP-dependent AMP-binding enzyme family. The cofactor is Mg(2+). In terms of processing, acetylated. Deacetylation by the SIR2-homolog deacetylase activates the enzyme.

The catalysed reaction is acetate + ATP + CoA = acetyl-CoA + AMP + diphosphate. Functionally, catalyzes the conversion of acetate into acetyl-CoA (AcCoA), an essential intermediate at the junction of anabolic and catabolic pathways. AcsA undergoes a two-step reaction. In the first half reaction, AcsA combines acetate with ATP to form acetyl-adenylate (AcAMP) intermediate. In the second half reaction, it can then transfer the acetyl group from AcAMP to the sulfhydryl group of CoA, forming the product AcCoA. This Gemmatimonas aurantiaca (strain DSM 14586 / JCM 11422 / NBRC 100505 / T-27) protein is Acetyl-coenzyme A synthetase.